Reading from the N-terminus, the 479-residue chain is mRNA export factor ICP27 homolog (479 aa).

The span at 1–15 shows a compositional bias: low complexity; it reads MVPSQRLSRTSSISS. Disordered regions lie at residues 1–77 and 91–210; these read MVPS…PSSV and KKWD…NKPW. Residues 35–44 are compositionally biased toward acidic residues; sequence TDCDMDPMEG. The segment covering 132–142 has biased composition (basic and acidic residues); it reads EVHGCTDESYG. Zn(2+)-binding residues include Cys-354, His-445, Cys-449, and Cys-454. The CHC2-type zinc-finger motif lies at 354–454; sequence CFLPNTRDYN…HTRDCRSASC (101 aa).

It belongs to the HHV-1 ICP27 protein family. Interacts with host XPO1 and with the XPO1 export pathway components small GTPase RAN and nucleoporin NUP214. Interacts with host SPEN, OTT1 and OTT3. Interacts with host SRSF1, SRSF3, SRSF7 and SRPK1. Interacts with host DHX9; this interaction may have an inhibitory effect on virion production. Interacts (via N-terminus) with host NXF1; this interaction plays a role in mRNA export. Post-translationally, phosphorylated by cellular protein kinase CK2.

Its subcellular location is the host nucleus. The protein localises to the host cytoplasm. Promotes the nuclear export of a subset of early and late viral mRNAs by interacting with mRNAs and cellular export proteins. Additionally may prevent the establishment of cellular antiviral state, by acting as an alternative splicing factor for cellular RNAs such as STAT1, resulting in a STAT1 mRNA incapable of producing the STAT1alpha isoform. The polypeptide is mRNA export factor ICP27 homolog (Homo sapiens (Human)).